A 275-amino-acid chain; its full sequence is Axoneme-associated protein mst101(3) (275 aa).

Tandem repeats lie at residues 64–79 (KKKCAEAAKKEKEAAE), 80–95 (KKKCAEAAKKEKEAAE), 96–111 (KKKCAEAAKKEQEAAQ), 112–127 (KKKCAELAKKEKEAAE), 128–143 (KKKCAEAAKKEKEAAE), 144–159 (RKKCEEAAFKQKCEEA), 160–175 (AKKKKEAKKAAELQQK), 181–196 (KKEKEAEMMKKCEEAA), 197–212 (KKKAAEEAAKKKAEEV), 215–230 (KKKADEAAAKKKCAEA), 231–246 (KKKAEEAALKKMCEEA), and 249–264 (KKMCEEAALQKKCAEA). The 12 X 16 AA tandem repeats of [KRA]-K-[KEM]-[CKA]-[AEKD]-[EA]-[ALE]-[AMK]-[FKAML]-[KQA]-[EQKA]-[KQCEM]-[ECLA]-[AEQ]-[AEQ]-[EQAKV] stretch occupies residues 64 to 264 (KKKCAEAAKK…AALQKKCAEA (201 aa)).

In terms of tissue distribution, testis.

It localises to the cytoplasm. Possible structural role in the sperm tail. The sequence is that of Axoneme-associated protein mst101(3) (mst101(3)) from Drosophila hydei (Fruit fly).